Here is a 290-residue protein sequence, read N- to C-terminus: 33 kDa chaperonin (290 aa).

Disulfide bonds link Cys235–Cys237 and Cys268–Cys271.

This sequence belongs to the HSP33 family. Post-translationally, under oxidizing conditions two disulfide bonds are formed involving the reactive cysteines. Under reducing conditions zinc is bound to the reactive cysteines and the protein is inactive.

The protein resides in the cytoplasm. Redox regulated molecular chaperone. Protects both thermally unfolding and oxidatively damaged proteins from irreversible aggregation. Plays an important role in the bacterial defense system toward oxidative stress. The polypeptide is 33 kDa chaperonin (Streptococcus pyogenes serotype M2 (strain MGAS10270)).